We begin with the raw amino-acid sequence, 196 residues long: Crossover junction endodeoxyribonuclease RuvC (196 aa).

Active-site residues include aspartate 23, glutamate 83, and histidine 156. Residues aspartate 23, glutamate 83, and histidine 156 each coordinate Mg(2+).

It belongs to the RuvC family. As to quaternary structure, homodimer which binds Holliday junction (HJ) DNA. The HJ becomes 2-fold symmetrical on binding to RuvC with unstacked arms; it has a different conformation from HJ DNA in complex with RuvA. In the full resolvosome a probable DNA-RuvA(4)-RuvB(12)-RuvC(2) complex forms which resolves the HJ. Mg(2+) serves as cofactor.

It is found in the cytoplasm. The enzyme catalyses Endonucleolytic cleavage at a junction such as a reciprocal single-stranded crossover between two homologous DNA duplexes (Holliday junction).. In terms of biological role, the RuvA-RuvB-RuvC complex processes Holliday junction (HJ) DNA during genetic recombination and DNA repair. Endonuclease that resolves HJ intermediates. Cleaves cruciform DNA by making single-stranded nicks across the HJ at symmetrical positions within the homologous arms, yielding a 5'-phosphate and a 3'-hydroxyl group; requires a central core of homology in the junction. The consensus cleavage sequence is 5'-(A/T)TT(C/G)-3'. Cleavage occurs on the 3'-side of the TT dinucleotide at the point of strand exchange. HJ branch migration catalyzed by RuvA-RuvB allows RuvC to scan DNA until it finds its consensus sequence, where it cleaves and resolves the cruciform DNA. The chain is Crossover junction endodeoxyribonuclease RuvC from Treponema pallidum (strain Nichols).